A 340-amino-acid chain; its full sequence is Phosphate acyltransferase (340 aa).

It belongs to the PlsX family. As to quaternary structure, homodimer. Probably interacts with PlsY.

It is found in the cytoplasm. The catalysed reaction is a fatty acyl-[ACP] + phosphate = an acyl phosphate + holo-[ACP]. It participates in lipid metabolism; phospholipid metabolism. Functionally, catalyzes the reversible formation of acyl-phosphate (acyl-PO(4)) from acyl-[acyl-carrier-protein] (acyl-ACP). This enzyme utilizes acyl-ACP as fatty acyl donor, but not acyl-CoA. The sequence is that of Phosphate acyltransferase from Clostridioides difficile (strain 630) (Peptoclostridium difficile).